The sequence spans 341 residues: Long-chain acyl-[acyl-carrier-protein] reductase (341 aa).

This sequence belongs to the short-chain dehydrogenases/reductases (SDR) family. A divalent metal cation is required as a cofactor.

The catalysed reaction is a long-chain fatty aldehyde + holo-[ACP] + NADP(+) = a long-chain fatty acyl-[ACP] + NADPH + H(+). The enzyme catalyses a long-chain fatty aldehyde + holo-[ACP] + NAD(+) = a long-chain fatty acyl-[ACP] + NADH + H(+). In terms of biological role, catalyzes the NADP-dependent reduction of long-chain acyl-ACP to the corresponding fatty aldehyde. Involved in the biosynthesis of alkanes, mainly heptadecane and pentadecane, by producing the fatty aldehydes used by aldehyde decarbonylase. In Synechococcus elongatus (strain ATCC 33912 / PCC 7942 / FACHB-805) (Anacystis nidulans R2), this protein is Long-chain acyl-[acyl-carrier-protein] reductase.